A 370-amino-acid chain; its full sequence is Platelet-derived growth factor D (370 aa).

A signal peptide spans 1-18 (MHRLIFVYTLICANFCSC). A CUB domain is found at 52 to 170 (RDETIQVKGN…PGFKIYYSLL (119 aa)). C109 and C131 are joined by a disulfide. An N-linked (GlcNAc...) asparagine glycan is attached at N276. 2 disulfide bridges follow: C302–C360 and C306–C362.

This sequence belongs to the PDGF/VEGF growth factor family. As to quaternary structure, homodimer; disulfide-linked. Interacts with PDGFRB homodimers, and with heterodimers formed by PDGFRA and PDGFRB. In terms of processing, activated by proteolytic cleavage. Proteolytic removal of the N-terminal CUB domain releasing the core domain is necessary for unmasking the receptor-binding epitopes of the core domain. Cleavage after Arg-247 or Arg-249 by urokinase plasminogen activator gives rise to the active form. Expressed at high levels in the heart, pancreas, adrenal gland and ovary and at low levels in placenta, liver, kidney, prostate, testis, small intestine, spleen and colon. In the kidney, expressed by the visceral epithelial cells of the glomeruli. A widespread expression is also seen in the medial smooth muscle cells of arteries and arterioles, as well as in smooth muscle cells of vasa rectae in the medullary area. Expressed in the adventitial connective tissue surrounding the suprarenal artery. In chronic obstructive nephropathy, a persistent expression is seen in glomerular visceral epithelial cells and vascular smooth muscle cells, as well as de novo expression by periglomerular interstitial cells and by some neointimal cells of atherosclerotic vessels. Expression in normal prostate is seen preferentially in the mesenchyme of the gland while expression is increased and more profuse in prostate carcinoma. Expressed in many ovarian, lung, renal and brain cancer-derived cell lines.

It is found in the secreted. Functionally, growth factor that plays an essential role in the regulation of embryonic development, cell proliferation, cell migration, survival and chemotaxis. Potent mitogen for cells of mesenchymal origin. Plays an important role in wound healing. Induces macrophage recruitment, increased interstitial pressure, and blood vessel maturation during angiogenesis. Can initiate events that lead to a mesangial proliferative glomerulonephritis, including influx of monocytes and macrophages and production of extracellular matrix. This chain is Platelet-derived growth factor D (PDGFD), found in Homo sapiens (Human).